The primary structure comprises 369 residues: Dual-specificity RNA methyltransferase RlmN (369 aa).

Catalysis depends on Glu-96, which acts as the Proton acceptor. The Radical SAM core domain maps to 102–338 (DGERGTLCVS…VTTIRTTRGD (237 aa)). Cys-109 and Cys-344 are oxidised to a cystine. [4Fe-4S] cluster contacts are provided by Cys-116, Cys-120, and Cys-123. S-adenosyl-L-methionine contacts are provided by residues 169–170 (GE), Ser-201, 223–225 (SLH), and Asn-301. The active-site S-methylcysteine intermediate is Cys-344.

This sequence belongs to the radical SAM superfamily. RlmN family. Requires [4Fe-4S] cluster as cofactor.

It is found in the cytoplasm. The enzyme catalyses adenosine(2503) in 23S rRNA + 2 reduced [2Fe-2S]-[ferredoxin] + 2 S-adenosyl-L-methionine = 2-methyladenosine(2503) in 23S rRNA + 5'-deoxyadenosine + L-methionine + 2 oxidized [2Fe-2S]-[ferredoxin] + S-adenosyl-L-homocysteine. It carries out the reaction adenosine(37) in tRNA + 2 reduced [2Fe-2S]-[ferredoxin] + 2 S-adenosyl-L-methionine = 2-methyladenosine(37) in tRNA + 5'-deoxyadenosine + L-methionine + 2 oxidized [2Fe-2S]-[ferredoxin] + S-adenosyl-L-homocysteine. In terms of biological role, specifically methylates position 2 of adenine 2503 in 23S rRNA and position 2 of adenine 37 in tRNAs. m2A2503 modification seems to play a crucial role in the proofreading step occurring at the peptidyl transferase center and thus would serve to optimize ribosomal fidelity. In Marinobacter nauticus (strain ATCC 700491 / DSM 11845 / VT8) (Marinobacter aquaeolei), this protein is Dual-specificity RNA methyltransferase RlmN.